The sequence spans 182 residues: ATP synthase subunit b 1 (182 aa).

Residues 24–44 traverse the membrane as a helical segment; that stretch reads FADPAFWVSIAFLMVVGFVYI.

This sequence belongs to the ATPase B chain family. In terms of assembly, F-type ATPases have 2 components, F(1) - the catalytic core - and F(0) - the membrane proton channel. F(1) has five subunits: alpha(3), beta(3), gamma(1), delta(1), epsilon(1). F(0) has three main subunits: a(1), b(2) and c(10-14). The alpha and beta chains form an alternating ring which encloses part of the gamma chain. F(1) is attached to F(0) by a central stalk formed by the gamma and epsilon chains, while a peripheral stalk is formed by the delta and b chains.

Its subcellular location is the cell inner membrane. Its function is as follows. F(1)F(0) ATP synthase produces ATP from ADP in the presence of a proton or sodium gradient. F-type ATPases consist of two structural domains, F(1) containing the extramembraneous catalytic core and F(0) containing the membrane proton channel, linked together by a central stalk and a peripheral stalk. During catalysis, ATP synthesis in the catalytic domain of F(1) is coupled via a rotary mechanism of the central stalk subunits to proton translocation. Functionally, component of the F(0) channel, it forms part of the peripheral stalk, linking F(1) to F(0). This is ATP synthase subunit b 1 from Rhodospirillum rubrum (strain ATCC 11170 / ATH 1.1.1 / DSM 467 / LMG 4362 / NCIMB 8255 / S1).